The chain runs to 463 residues: tRNA modification GTPase MnmE (463 aa).

Residues arginine 30, glutamate 92, and arginine 132 each coordinate (6S)-5-formyl-5,6,7,8-tetrahydrofolate. One can recognise a TrmE-type G domain in the interval 227-386 (GLRVALVGRP…LVQAVLERCG (160 aa)). Asparagine 237 contacts K(+). GTP contacts are provided by residues 237–242 (NVGKSS), 256–262 (TDLPGTT), 281–284 (DTAG), and 342–345 (NKAD). A Mg(2+)-binding site is contributed by serine 241. K(+) contacts are provided by threonine 256, leucine 258, and threonine 261. A Mg(2+)-binding site is contributed by threonine 262. Residue lysine 463 participates in (6S)-5-formyl-5,6,7,8-tetrahydrofolate binding.

This sequence belongs to the TRAFAC class TrmE-Era-EngA-EngB-Septin-like GTPase superfamily. TrmE GTPase family. As to quaternary structure, homodimer. Heterotetramer of two MnmE and two MnmG subunits. Requires K(+) as cofactor.

Its subcellular location is the cytoplasm. Exhibits a very high intrinsic GTPase hydrolysis rate. Involved in the addition of a carboxymethylaminomethyl (cmnm) group at the wobble position (U34) of certain tRNAs, forming tRNA-cmnm(5)s(2)U34. The sequence is that of tRNA modification GTPase MnmE from Synechococcus sp. (strain CC9311).